The sequence spans 332 residues: Ribosomal RNA small subunit methyltransferase H (332 aa).

Residues 37-39, aspartate 55, phenylalanine 82, aspartate 103, and glutamine 110 each bind S-adenosyl-L-methionine; that span reads GGY. Positions 281 to 332 are disordered; that stretch reads TKRPVTPSDEETAANPRARSAKLRAGERTAAPAQPEAPLPHWPTLASVMGRR.

The protein belongs to the methyltransferase superfamily. RsmH family.

It is found in the cytoplasm. It catalyses the reaction cytidine(1402) in 16S rRNA + S-adenosyl-L-methionine = N(4)-methylcytidine(1402) in 16S rRNA + S-adenosyl-L-homocysteine + H(+). Functionally, specifically methylates the N4 position of cytidine in position 1402 (C1402) of 16S rRNA. The polypeptide is Ribosomal RNA small subunit methyltransferase H (Rhodopseudomonas palustris (strain BisA53)).